We begin with the raw amino-acid sequence, 33 residues long: Putative tumor antigen NA88-A (33 aa).

As to expression, expressed in testis and melanoma cell lines.

In Homo sapiens (Human), this protein is Putative tumor antigen NA88-A (VENTXP1).